A 570-amino-acid chain; its full sequence is Protein HEATR9 (570 aa).

This Macaca fascicularis (Crab-eating macaque) protein is Protein HEATR9 (HEATR9).